A 554-amino-acid chain; its full sequence is Glucose-6-phosphate isomerase (554 aa).

Glu-358 functions as the Proton donor in the catalytic mechanism. Active-site residues include His-389 and Lys-515. Positions 527 to 540 are enriched in polar residues; that stretch reads SDGSPQRQSDSSTD. The segment at 527–554 is disordered; sequence SDGSPQRQSDSSTDALVRRYRTQRGRTG. Over residues 544-554 the composition is skewed to basic residues; the sequence is RRYRTQRGRTG.

It belongs to the GPI family.

It is found in the cytoplasm. It catalyses the reaction alpha-D-glucose 6-phosphate = beta-D-fructose 6-phosphate. It functions in the pathway carbohydrate biosynthesis; gluconeogenesis. It participates in carbohydrate degradation; glycolysis; D-glyceraldehyde 3-phosphate and glycerone phosphate from D-glucose: step 2/4. Functionally, catalyzes the reversible isomerization of glucose-6-phosphate to fructose-6-phosphate. This chain is Glucose-6-phosphate isomerase, found in Mycobacterium ulcerans (strain Agy99).